We begin with the raw amino-acid sequence, 447 residues long: Trichothecene C-3 esterase (447 aa).

Positions 1–22 are cleaved as a signal peptide; that stretch reads MALNRLVFSLSLWLGFIGAAQA. Asn59, Asn66, Asn136, and Asn189 each carry an N-linked (GlcNAc...) asparagine glycan. The active-site Charge relay system is Ser202. N-linked (GlcNAc...) asparagine glycans are attached at residues Asn238, Asn284, and Asn314. Catalysis depends on charge relay system residues Asp352 and His384. N-linked (GlcNAc...) asparagine glycosylation is found at Asn389 and Asn423.

The protein belongs to the AB hydrolase superfamily. Lipase family.

It participates in sesquiterpene biosynthesis; trichothecene biosynthesis. In terms of biological role, trichothecene C-3 esterase; part of the core gene cluster that mediates the biosynthesis of trichothecenes, a very large family of chemically related bicyclic sesquiterpene compounds acting as mycotoxins, including T2-toxin. The biosynthesis of trichothecenes begins with the cyclization of farnesyl diphosphate to trichodiene and is catalyzed by the trichodiene synthase TRI5. Trichodiene undergoes a series of oxygenations catalyzed by the cytochrome P450 monooxygenase TRI4. TRI4 controls the addition of four oxygens at C-2, C-3, C-11, and the C-12, C-13-epoxide to form the intermediate isotrichotriol. Isotrichotriol then undergoes a non-enzymatic isomerization and cyclization to form isotrichodermol. During this process, the oxygen at the C-2 position becomes the pyran ring oxygen and the hydroxyl group at C-11 is lost. More complex type A trichothecenes are built by modifying isotrichodermol through a series of paired hydroxylation and acetylation or acylation steps. Isotrichodermol is converted to isotrichodermin by the acetyltransferase TRI101. TRI101 encodes a C-3 transacetylase that acts as a self-protection or resistance factor during biosynthesis and that the presence of a free C-3 hydroxyl group is a key component of Fusarium trichothecene phytotoxicity. A second hydroxyl group is added to C-15 by the trichothecene C-15 hydroxylase TRI11, producing 15-decalonectrin, which is then acetylated by TRI3, producing calonectrin. A third hydroxyl group is added at C-4 by the cytochrome P450 monooxygenase TRI13, converting calonectrin to 3,15-diacetoxyspirpenol, which is subsequently acetylated by the acetyltransferase TRI7. A fourth hydroxyl group is added to C-8 by the cytochrome P450 monooxygenase TRI1, followed by the addition of an isovaleryl moiety by TRI16. Finally, the acetyl group is removed from the C-3 position by the trichothecene C-3 esterase TRI8 to produce T-2 toxin. This is Trichothecene C-3 esterase from Fusarium sporotrichioides.